The following is a 292-amino-acid chain: Phosphatidylglycerol--prolipoprotein diacylglyceryl transferase (292 aa).

The next 4 helical transmembrane spans lie at 24-44, 65-85, 110-130, and 136-156; these read ISVHWYGIMYVSAMLIALLIA, FFIWVEIGVILGGRIGYVLIY, GISGFSYHGAMAGFVLAAIIF, and QSFWIFMDLSAISIPLGYVFG. Residue R157 coordinates a 1,2-diacyl-sn-glycero-3-phospho-(1'-sn-glycerol). Transmembrane regions (helical) follow at residues 192–212, 219–239, and 256–276; these read SQLFEAFAEGIIVFILLICLL, GTLLVAYGVFYALARFVCEYF, and GQILSLVMLVISIFLGLFVFV.

The protein belongs to the Lgt family.

It localises to the cell inner membrane. The enzyme catalyses L-cysteinyl-[prolipoprotein] + a 1,2-diacyl-sn-glycero-3-phospho-(1'-sn-glycerol) = an S-1,2-diacyl-sn-glyceryl-L-cysteinyl-[prolipoprotein] + sn-glycerol 1-phosphate + H(+). Its pathway is protein modification; lipoprotein biosynthesis (diacylglyceryl transfer). Functionally, catalyzes the transfer of the diacylglyceryl group from phosphatidylglycerol to the sulfhydryl group of the N-terminal cysteine of a prolipoprotein, the first step in the formation of mature lipoproteins. This is Phosphatidylglycerol--prolipoprotein diacylglyceryl transferase from Helicobacter hepaticus (strain ATCC 51449 / 3B1).